Reading from the N-terminus, the 128-residue chain is Glycine cleavage system H protein (128 aa).

Positions 22–104 constitute a Lipoyl-binding domain; the sequence is TALVGVTDYA…YASGWLVKIK (83 aa). K63 carries the post-translational modification N6-lipoyllysine.

Belongs to the GcvH family. As to quaternary structure, the glycine cleavage system is composed of four proteins: P, T, L and H. Requires (R)-lipoate as cofactor.

Functionally, the glycine cleavage system catalyzes the degradation of glycine. The H protein shuttles the methylamine group of glycine from the P protein to the T protein. This chain is Glycine cleavage system H protein, found in Halothermothrix orenii (strain H 168 / OCM 544 / DSM 9562).